Reading from the N-terminus, the 1269-residue chain is MVIDKKKVKNRTPYFLNRIIEKSELREIIEVVFHKNGIAKASLIADNLKEIGFGFATKAGISISIEDLKIPPNKSRILQITNQELRKTEISFKRAEITTIEKSQKSTDTWNNASEALKDEIIKYYRLTDPLNPVYMMAFSGARGNLSQVKQLVGMRGLMADPNGQIIELPILSNFREGLNVTEYLISSYGARKGLVDTSLRTADSGYLTRRLVDVAQDIIVREIDCKTNNGITFSNIQNNEKIIIPLYKRLIGRILADDVKNPITPQVNIASKNTLITGNLIKEFKKNNIQKIKLRSPLTCQSYRSICQKCYGASLSDGKLVDIGEAIGIIAAQSIGEPGTQLTMRTFHTGGVFTAEFSKPIKTLFEGVIKYPSNLKFHHVRTRHGDDAIIIEKSATFDIRTTQSERKITLETGTTLLVKDNSFIKKNQVIAETSTSGRLITEKSTKDLISNSAGEIYFSDITIEERVDRHGNLTKISKQHGLIWILSGEVYNFPMGANLVVQNSFEVNKGCLLAKALIKSRHSGISRIRCAANYYAIDIILGTVTIRNANLYKDSKLFNNNYLLKTSNKKNFVVKALVGQKLSHSDIIAELIDDQYLTNTGGIVKYVNLKLAKTHKDDSEYTLSGIGYIFFIPQETHQINKDASILLANSGDYVNKNTEIAKGVFCKCSGLLEIIKSNNIIKEIIIKPGVVYPVSNNLSTFTNKIFYPGEKIIDNIVTNKIVYVEHIKLINKSCILIRPVNQYKVSNTESLFDFVTKGENKDLISLKVVNKSFFKDGEVIKSVKGVSLVNIQLIFYTKPSATAVTTKMEFVKDLDKSTNSTSEIKLRITATETTKIKYKQQKNIISQILIKEGQYITKDFPIIETLFLSRHDGRVVIKSNFKQKNNACLIIISPSNKKEIYINKKEHKLKIGDFIRVGDHLGTNKNFKSPYSGEVLDINDKLITIRIAEPYLISPGTLIHVNHGELIRKGDYLALLVFDKIKTGDIIQGLPRIEEILEARKPRETCHLAKFDGKIYVHYNDKGESLISLESQKKEKYVYILRLNQRVLVQSGTEVTIGEPITDGLINPHEMLEIFFEYFLTQTSPIQATKASFEKIRLELLKEIQQVYQSQKIEINDKHIEVIIRQMTSKVLIQERGDTTLFPGELVTINQIEKINSAIIAVNKKEAKYKPVLLGITKASLNTDSFISAASFQETTRILTEAAIEGKVDWLKGLKENVIIGRLIPGGTGLISLDNKDSIKMRLALRHKKNFLNKTFKKKNNKFLNKTY.

Zn(2+) contacts are provided by C226, C301, C308, and C311.

This sequence belongs to the RNA polymerase beta' chain family. RpoC2 subfamily. As to quaternary structure, in plastids the minimal PEP RNA polymerase catalytic core is composed of four subunits: alpha, beta, beta', and beta''. When a (nuclear-encoded) sigma factor is associated with the core the holoenzyme is formed, which can initiate transcription. It depends on Zn(2+) as a cofactor.

Its subcellular location is the plastid. It localises to the chloroplast. The enzyme catalyses RNA(n) + a ribonucleoside 5'-triphosphate = RNA(n+1) + diphosphate. DNA-dependent RNA polymerase catalyzes the transcription of DNA into RNA using the four ribonucleoside triphosphates as substrates. The sequence is that of DNA-directed RNA polymerase subunit beta'' from Cyanidium caldarium (Red alga).